Reading from the N-terminus, the 357-residue chain is Olfactory receptor 2B2 (357 aa).

Over 1 to 25 the chain is Extracellular; it reads MNWVNKSVPQEFILLVFSDQPWLEI. The N-linked (GlcNAc...) asparagine glycan is linked to Asn-5. A helical membrane pass occupies residues 26–49; sequence PPFVMFLFSYILTIFGNLTIILVS. Residues 50 to 57 lie on the Cytoplasmic side of the membrane; it reads HVDFKLHT. A helical transmembrane segment spans residues 58–79; sequence PMYFFLSNLSLLDLCYTTSTVP. Residues 80-100 are Extracellular-facing; that stretch reads QMLVNICNTRKVISYGGCVAQ. A disulfide bridge connects residues Cys-97 and Cys-189. The helical transmembrane segment at 101 to 120 threads the bilayer; it reads LFIFLALGSTECLLLAVMCF. Topologically, residues 121–139 are cytoplasmic; the sequence is DRFVAICRPLHYSIIMHQR. The chain crosses the membrane as a helical span at residues 140–158; sequence LCFQLAAASWISGFSNSVL. At 159-195 the chain is on the extracellular side; it reads QSTWTLKMPLCGHKEVDHFFCEVPALLKLSCVDTTAN. Residues 196–219 traverse the membrane as a helical segment; it reads EAELFFISVLFLLIPVTLILISYA. Residues 220–236 are Cytoplasmic-facing; it reads FIVQAVLRIQSAEGQRK. Residues 237-259 form a helical membrane-spanning segment; it reads AFGTCGSHLIVVSLFYGTAISMY. Over 260–272 the chain is Extracellular; that stretch reads LQPPSPSSKDRGK. The helical transmembrane segment at 273–292 threads the bilayer; it reads MVSLFCGIIAPMLNPLIYTL. Residues 293-357 lie on the Cytoplasmic side of the membrane; that stretch reads RNKEVKEAFK…YCNLPQRKFP (65 aa).

The protein belongs to the G-protein coupled receptor 1 family.

It is found in the cell membrane. Its function is as follows. Odorant receptor. In Homo sapiens (Human), this protein is Olfactory receptor 2B2 (OR2B2).